Consider the following 504-residue polypeptide: MNQYVIAIDQGTTSSRAIVFDHAGNIVSTGQMEHEQIFPQAGWVEHNPAEIWNNTREVIGSALSKANLTRHDIAAVGITNQRETAVVWDKNTGEAVYNAIVWQDTRTQSIVDELAQDGGPERFKQKVGLPLATYFSGTKIKWILDNVDGARERAEAGDLLFGNTDAWVLWNLTGGVDGGVHVTDVTNASRTLFMDLETLQWDQEILDIFGVPASMMPAIKSSSEVYGHVHTSQLLRETPVAGILGDQQAATFGQAAFQPGEAKNTYGTGCFLIFNTGEEIVHSKNGLLTTLGYKLGDAKPHYALEGSIAVTGSLIQWLRDNLGMISSAPEVEELAAGVRDNGGVYIVPAFSGLFAPYWRADARGAIVGLTRFANKGHIARAALEATAFQTREVLDAVNADSGVPLTELKVDGGMVANEALMQFQADILGVPVVRPKVVETTALGAAYAAGLAVGFWKDLGELSANWNEDKRWEPQLPAEEQERQLRLWKKAVTKSMDWVDEDVK.

An ADP-binding site is contributed by Thr12. Thr12, Thr13, and Ser14 together coordinate ATP. Thr12 is a sn-glycerol 3-phosphate binding site. ADP is bound at residue Arg16. 4 residues coordinate sn-glycerol 3-phosphate: Arg82, Glu83, Tyr134, and Asp246. Glycerol contacts are provided by Arg82, Glu83, Tyr134, Asp246, and Gln247. Residues Thr268 and Gly312 each contribute to the ADP site. Residues Thr268, Gly312, Gln316, and Gly413 each coordinate ATP. ADP-binding residues include Gly413 and Asn417.

It belongs to the FGGY kinase family.

It carries out the reaction glycerol + ATP = sn-glycerol 3-phosphate + ADP + H(+). It participates in polyol metabolism; glycerol degradation via glycerol kinase pathway; sn-glycerol 3-phosphate from glycerol: step 1/1. With respect to regulation, inhibited by fructose 1,6-bisphosphate (FBP). Key enzyme in the regulation of glycerol uptake and metabolism. Catalyzes the phosphorylation of glycerol to yield sn-glycerol 3-phosphate. This chain is Glycerol kinase, found in Paenarthrobacter aurescens (strain TC1).